The primary structure comprises 410 residues: Probable 2,3-bisphosphoglycerate-independent phosphoglycerate mutase (410 aa).

Belongs to the BPG-independent phosphoglycerate mutase family. A-PGAM subfamily.

It catalyses the reaction (2R)-2-phosphoglycerate = (2R)-3-phosphoglycerate. It functions in the pathway carbohydrate degradation; glycolysis; pyruvate from D-glyceraldehyde 3-phosphate: step 3/5. Catalyzes the interconversion of 2-phosphoglycerate and 3-phosphoglycerate. The polypeptide is Probable 2,3-bisphosphoglycerate-independent phosphoglycerate mutase (Deinococcus radiodurans (strain ATCC 13939 / DSM 20539 / JCM 16871 / CCUG 27074 / LMG 4051 / NBRC 15346 / NCIMB 9279 / VKM B-1422 / R1)).